Here is a 318-residue protein sequence, read N- to C-terminus: NADH-ubiquinone oxidoreductase chain 1 (318 aa).

8 consecutive transmembrane segments (helical) span residues 2–22 (FMINILTLILPILLAVAFLTL), 70–90 (MFIIAPVLALALALTMWSPLP), 100–120 (LGVLFMLAMSSLAVYSILWSG), 136–156 (VAQTISYEVTLAIILLSVLLM), 172–192 (LWLLFPSWPLAMMWFISTLAE), 222–242 (LFFLAEYANIIMMNMFTAILF), 253–273 (ELYTTNLIIKTLLLTMSFLWI), and 294–314 (LPLTLALCMWHISLPIMTASI).

Belongs to the complex I subunit 1 family. Core subunit of respiratory chain NADH dehydrogenase (Complex I) which is composed of 45 different subunits.

The protein resides in the mitochondrion inner membrane. It catalyses the reaction a ubiquinone + NADH + 5 H(+)(in) = a ubiquinol + NAD(+) + 4 H(+)(out). Functionally, core subunit of the mitochondrial membrane respiratory chain NADH dehydrogenase (Complex I) which catalyzes electron transfer from NADH through the respiratory chain, using ubiquinone as an electron acceptor. Essential for the catalytic activity and assembly of complex I. In Balaenoptera musculus (Blue whale), this protein is NADH-ubiquinone oxidoreductase chain 1 (MT-ND1).